The following is a 214-amino-acid chain: MRIILLGAPGAGKGTQAQFIMEKYGIPQISTGDMLRAAIKAGTELGKQAKAVIDAGQLVSDEIILGLIKERIAQEDCAKGFLLDGFPRTIPQADGLKEMGVAVDYVIEFDVADDVIVERMAGRRAHLPSGRTYHVVYNPPKVEGKDDVTGEDLVVRDDDKEETVRARLGVYHSQTAPLIEYYGKEAAEGNTKYLKFDGTKQVAQVSADIEKALA.

10–15 (GAGKGT) is a binding site for ATP. The segment at 30 to 59 (STGDMLRAAIKAGTELGKQAKAVIDAGQLV) is NMP. AMP-binding positions include Thr-31, Arg-36, 57–59 (QLV), 85–88 (GFPR), and Gln-92. Residues 122-159 (GRRAHLPSGRTYHVVYNPPKVEGKDDVTGEDLVVRDDD) form an LID region. Residues Arg-123 and 132 to 133 (TY) each bind ATP. 2 residues coordinate AMP: Arg-156 and Arg-167. Lys-200 lines the ATP pocket.

Belongs to the adenylate kinase family. Monomer.

The protein localises to the cytoplasm. The enzyme catalyses AMP + ATP = 2 ADP. The protein operates within purine metabolism; AMP biosynthesis via salvage pathway; AMP from ADP: step 1/1. Functionally, catalyzes the reversible transfer of the terminal phosphate group between ATP and AMP. Plays an important role in cellular energy homeostasis and in adenine nucleotide metabolism. In Vibrio vulnificus (strain CMCP6), this protein is Adenylate kinase.